Reading from the N-terminus, the 187-residue chain is Probable chorismate pyruvate-lyase (187 aa).

The substrate site is built by R76, L114, and E173.

This sequence belongs to the UbiC family.

Its subcellular location is the cytoplasm. The enzyme catalyses chorismate = 4-hydroxybenzoate + pyruvate. The protein operates within cofactor biosynthesis; ubiquinone biosynthesis. Functionally, removes the pyruvyl group from chorismate, with concomitant aromatization of the ring, to provide 4-hydroxybenzoate (4HB) for the ubiquinone pathway. This Shewanella amazonensis (strain ATCC BAA-1098 / SB2B) protein is Probable chorismate pyruvate-lyase.